We begin with the raw amino-acid sequence, 348 residues long: MNIMIEIPEFIIPLIPWIRGVVGLVLVGAIFLGAMGAVWLERKLSADIQFRYGPSRVGKFGLLQLVADAIKLFTKEDMRPRNADRLLFDNAPIFMMSSVFLMLVAIPVGAVFINGVEYPLAVTEMDISVLYIEAMSAITIFGIFMIAYGSNNKYSLLGAFRNFARMVGYEVPLGITVVSVAIMTGSLNIVEIASAQGLLWNIFLQPIGFIVFFIALMADMGRLPFDQNESEEELVAGWITEYTGMRFGLGFFAEYIHMILGSFLVALLFLGGWNVPAFVANNPVLGLIAPTGFFLLKTVLVLMTIIGMRWAVPRFRIDQVVDLSWKRLLPLSLLNLVWAVGLGLYLGA.

The next 8 helical transmembrane spans lie at 20–40 (GVVG…AVWL), 93–113 (IFMM…AVFI), 127–147 (ISVL…FMIA), 172–192 (PLGI…IVEI), 198–218 (LLWN…ALMA), 259–279 (ILGS…PAFV), 286–306 (GLIA…MTII), and 328–348 (LLPL…YLGA).

The protein belongs to the complex I subunit 1 family. As to quaternary structure, the FPO complex is composed of at least 13 different subunits. FpoA, FpoH, FpoJ, FpoK, FpoL, FpoM and FpoN proteins constitute the membrane sector of the complex.

It localises to the cell membrane. The enzyme catalyses methanophenazine + reduced coenzyme F420-(gamma-L-Glu)(n) = dihydromethanophenazine + oxidized coenzyme F420-(gamma-L-Glu)(n) + H(+). Functionally, component of the F(420)H(2) dehydrogenase (FPO complex) which is part of the energy-conserving F(420)H(2):heterodisulfide oxidoreductase system. The membrane-bound electron transfer system of the complex plays an important role in the metabolism of methylotrophic methanogens when the organisms grow on methanol or methylamines. Catalyzes the oxidation of methanophenazine to dihydromethanophenazine. It shuttles electrons from F(420)H(2), via FAD and iron-sulfur (Fe-S) centers, to methanophenazine (an electron carrier in the membrane). It couples the redox reaction to proton translocation (for every two electrons transferred, two hydrogen ions are translocated across the cytoplasmic membrane), and thus conserves the redox energy in a proton gradient. The protein is F(420)H(2) dehydrogenase subunit H of Methanosarcina acetivorans (strain ATCC 35395 / DSM 2834 / JCM 12185 / C2A).